Reading from the N-terminus, the 189-residue chain is Gluconokinase (189 aa).

Gly-16 to Ser-23 contacts ATP.

Belongs to the gluconokinase GntK/GntV family. In terms of assembly, monomer.

It catalyses the reaction D-gluconate + ATP = 6-phospho-D-gluconate + ADP + H(+). It participates in carbohydrate acid metabolism; D-gluconate degradation. Phosphorylates gluconate to 6-phosphogluconate. This Arabidopsis thaliana (Mouse-ear cress) protein is Gluconokinase.